The sequence spans 192 residues: Ribonuclease HII (192 aa).

One can recognise an RNase H type-2 domain in the interval 2–187 (KNLCGIDEAG…KALGENEIGV (186 aa)). Positions 8, 9, and 97 each coordinate a divalent metal cation.

It belongs to the RNase HII family. Mn(2+) is required as a cofactor. Requires Mg(2+) as cofactor.

It is found in the cytoplasm. The enzyme catalyses Endonucleolytic cleavage to 5'-phosphomonoester.. Its function is as follows. Endonuclease that specifically degrades the RNA of RNA-DNA hybrids. This is Ribonuclease HII from Aliarcobacter butzleri (strain RM4018) (Arcobacter butzleri).